The sequence spans 314 residues: Olfactory receptor 9I1 (314 aa).

The Extracellular portion of the chain corresponds to 1 to 25 (MAKNNLTRVTEFILMGFMDHPKLEI). N-linked (GlcNAc...) asparagine glycosylation is present at asparagine 5. The chain crosses the membrane as a helical span at residues 26–46 (PLFLVFLSFYLVTLLGNVGMI). Over 47–54 (MLIQVDVK) the chain is Cytoplasmic. The chain crosses the membrane as a helical span at residues 55–75 (LYTPMYFFLSHLSLLDACYTS). Topologically, residues 76–99 (VITPQILATLATGKTVISYGHCAA) are extracellular. Cysteine 97 and cysteine 189 are oxidised to a cystine. Residues 100 to 120 (QFFLFTICAGTECFLLAVMAY) form a helical membrane-spanning segment. Residues 121-139 (DRYAAIRNPLLYTVAMNPR) lie on the Cytoplasmic side of the membrane. A helical membrane pass occupies residues 140 to 160 (LCWSLVVGAYVCGVSGAILRT). Residues 161-197 (TCTFTLSFCKDNQINFFFCDLPPLLKLACSDTANIEI) are Extracellular-facing. A helical transmembrane segment spans residues 198-217 (VIIFFGNFVILANASVILIS). Topologically, residues 218–237 (YLLIIKTILKVKSSGGRAKT) are cytoplasmic. Residues 238–258 (FSTCASHITAVALFFGALIFM) traverse the membrane as a helical segment. Residues 259-271 (YLQSGSGKSLEED) lie on the Extracellular side of the membrane. The helical transmembrane segment at 272 to 292 (KVVSVFYTVVIPMLNPLIYSL) threads the bilayer. Residues 293–314 (RNKDVKDAFRKVARRLQVSLSM) are Cytoplasmic-facing.

Belongs to the G-protein coupled receptor 1 family.

It is found in the cell membrane. In terms of biological role, odorant receptor. This Homo sapiens (Human) protein is Olfactory receptor 9I1 (OR9I1).